The chain runs to 454 residues: Tyrosine aminotransferase (454 aa).

M1 carries the N-acetylmethionine modification. K280 is subject to N6-(pyridoxal phosphate)lysine. Phosphoserine is present on S448.

It belongs to the class-I pyridoxal-phosphate-dependent aminotransferase family. In terms of assembly, homodimer. Requires pyridoxal 5'-phosphate as cofactor.

The enzyme catalyses L-tyrosine + 2-oxoglutarate = 3-(4-hydroxyphenyl)pyruvate + L-glutamate. It functions in the pathway amino-acid degradation; L-phenylalanine degradation; acetoacetate and fumarate from L-phenylalanine: step 2/6. Transaminase involved in tyrosine breakdown. Converts tyrosine to p-hydroxyphenylpyruvate. Can catalyze the reverse reaction, using glutamic acid, with 2-oxoglutarate as cosubstrate (in vitro). Has much lower affinity and transaminase activity for phenylalanine. The chain is Tyrosine aminotransferase (Tat) from Mus musculus (Mouse).